The primary structure comprises 74 residues: Putative membrane protein insertion efficiency factor (74 aa).

The protein belongs to the UPF0161 family.

It is found in the cell inner membrane. In terms of biological role, could be involved in insertion of integral membrane proteins into the membrane. This chain is Putative membrane protein insertion efficiency factor, found in Blochmanniella floridana.